The chain runs to 383 residues: Probable transcriptional repressor C1348.12 (383 aa).

Residues 34–60 (CVICRSKKQKCDGQLPCLYCKKYEYQC) constitute a DNA-binding region (zn(2)-C6 fungal-type).

Its subcellular location is the nucleus. Functionally, probable transcriptional repressor of multidrug resistance genes. This Schizosaccharomyces pombe (strain 972 / ATCC 24843) (Fission yeast) protein is Probable transcriptional repressor C1348.12.